Consider the following 130-residue polypeptide: Ribonuclease VapC22 (130 aa).

The region spanning valine 4–arginine 119 is the PINc domain. The Mg(2+) site is built by aspartate 7 and aspartate 97.

This sequence belongs to the PINc/VapC protein family. It depends on Mg(2+) as a cofactor.

It localises to the secreted. In terms of biological role, toxic component of a type II toxin-antitoxin (TA) system. An RNase. Upon expression in M.smegmatis inhibits translation and colony formation. Its toxic effect on colony formation is neutralized by coexpression with cognate antitoxin VapB22; the effect on translation has not been tested but is probably neutralized also. This chain is Ribonuclease VapC22, found in Mycobacterium tuberculosis (strain ATCC 25618 / H37Rv).